A 117-amino-acid chain; its full sequence is Small nuclear ribonucleoprotein Sm D1 (117 aa).

One can recognise a Sm domain in the interval 2–74 (KLVRFLMKLT…IRYYILPDSL (73 aa)). Residues 81 to 117 (IDDSTKPKQKKKEVVRGRGRGRGRGTRGRGRGASRGF) are disordered. The span at 87–117 (PKQKKKEVVRGRGRGRGRGTRGRGRGASRGF) shows a compositional bias: basic residues.

Belongs to the snRNP core protein family. Belongs to the 40S cdc5-associated complex (or cwf complex), a spliceosome sub-complex reminiscent of a late-stage spliceosome composed of the U2, U5 and U6 snRNAs and at least brr2, cdc5, cwf2/prp3, cwf3/syf1, cwf4/syf3, cwf5/ecm2, spp42/cwf6, cwf7/spf27, cwf8, cwf9, cwf10, cwf11, cwf12, prp45/cwf13, cwf14, cwf15, cwf16, cwf17, cwf18, cwf19, cwf20, cwf21, cwf22, cwf23, cwf24, cwf25, cwf26, cyp7/cwf27, cwf28, cwf29/ist3, lea1, msl1, prp5/cwf1, prp10, prp12/sap130, prp17, prp22, sap61, sap62, sap114, sap145, slu7, smb1, smd1, smd3, smf1, smg1 and syf2. Interacts with saf5; the interaction is direct.

It is found in the nucleus. The protein localises to the cytoplasm. Its function is as follows. Plays a role in pre-mRNA splicing as a core component of the spliceosomal U1, U2, U4 and U5 small nuclear ribonucleoproteins (snRNPs), the building blocks of the spliceosome. The sequence is that of Small nuclear ribonucleoprotein Sm D1 (smd1) from Schizosaccharomyces pombe (strain 972 / ATCC 24843) (Fission yeast).